A 198-amino-acid chain; its full sequence is Segregation and condensation protein B (198 aa).

The interval 167 to 198 is disordered; the sequence is PKLADPEAEDPDQSEMDLFFDRFNQSKEQEEE. The span at 172–181 shows a compositional bias: acidic residues; it reads PEAEDPDQSE.

It belongs to the ScpB family. In terms of assembly, homodimer. Homodimerization may be required to stabilize the binding of ScpA to the Smc head domains. Component of a cohesin-like complex composed of ScpA, ScpB and the Smc homodimer, in which ScpA and ScpB bind to the head domain of Smc. The presence of the three proteins is required for the association of the complex with DNA.

The protein localises to the cytoplasm. Participates in chromosomal partition during cell division. May act via the formation of a condensin-like complex containing Smc and ScpA that pull DNA away from mid-cell into both cell halves. This chain is Segregation and condensation protein B, found in Listeria innocua serovar 6a (strain ATCC BAA-680 / CLIP 11262).